Here is a 352-residue protein sequence, read N- to C-terminus: Protein Wnt-3a (352 aa).

The N-terminal stretch at 1–18 (MASFGYFLFLCGLSQALS) is a signal peptide. A disulfide bridge links Cys-77 with Cys-88. Asn-87 and Asn-92 each carry an N-linked (GlcNAc...) asparagine glycan. Disulfide bonds link Cys-128/Cys-136, Cys-138/Cys-155, Cys-203/Cys-217, Cys-205/Cys-212, Cys-281/Cys-312, Cys-297/Cys-307, Cys-311/Cys-351, Cys-327/Cys-342, Cys-329/Cys-339, and Cys-334/Cys-335. Ser-209 carries O-palmitoleoyl serine; by PORCN lipidation. Residue Asn-298 is glycosylated (N-linked (GlcNAc...) asparagine).

This sequence belongs to the Wnt family. In terms of processing, palmitoleoylation is required for efficient binding to frizzled receptors. Depalmitoleoylation leads to inhibit the Wnt signaling pathway. Post-translationally, disulfide bonds have critical and distinct roles in secretion and activity. Loss of each conserved cysteine in WNT3A results in high molecular weight oxidized Wnt oligomers, which are formed through inter-Wnt disulfide bonding. As to expression, expressed in cornea. Isoform 1 is expressed in the primitive streak, dorsal neural tube, proximal otic vesicle, the apical ectodermal ridge and the epithelium of feather buds.

Its subcellular location is the secreted. It localises to the extracellular space. The protein localises to the extracellular matrix. It is found in the cytoplasm. Functionally, ligand for members of the frizzled family of seven transmembrane receptors. Functions in the canonical Wnt signaling pathway that results in activation of transcription factors of the TCF/LEF family. Regulates chick apical ectodermal ridge formation. Required for normal embryonic mesoderm development and formation of caudal somites. Required for normal morphogenesis of the developing neural tube. The protein is Protein Wnt-3a (WNT3A) of Gallus gallus (Chicken).